Reading from the N-terminus, the 160-residue chain is Cyclic pyranopterin monophosphate synthase (160 aa).

Substrate contacts are provided by residues 77-79 (LCH) and 114-115 (ME). Residue aspartate 129 is part of the active site.

It belongs to the MoaC family. As to quaternary structure, homohexamer; trimer of dimers.

It catalyses the reaction (8S)-3',8-cyclo-7,8-dihydroguanosine 5'-triphosphate = cyclic pyranopterin phosphate + diphosphate. It functions in the pathway cofactor biosynthesis; molybdopterin biosynthesis. Its function is as follows. Catalyzes the conversion of (8S)-3',8-cyclo-7,8-dihydroguanosine 5'-triphosphate to cyclic pyranopterin monophosphate (cPMP). The polypeptide is Cyclic pyranopterin monophosphate synthase (Alcanivorax borkumensis (strain ATCC 700651 / DSM 11573 / NCIMB 13689 / SK2)).